The chain runs to 172 residues: Translation initiation factor IF-3 (172 aa).

The protein belongs to the IF-3 family. Monomer.

Its subcellular location is the cytoplasm. In terms of biological role, IF-3 binds to the 30S ribosomal subunit and shifts the equilibrium between 70S ribosomes and their 50S and 30S subunits in favor of the free subunits, thus enhancing the availability of 30S subunits on which protein synthesis initiation begins. The chain is Translation initiation factor IF-3 from Geobacillus stearothermophilus (Bacillus stearothermophilus).